Reading from the N-terminus, the 1372-residue chain is Serine protease pic autotransporter (1372 aa).

Residues 1 to 55 (MNKVYSLKYCPVTGGLIAVSELARRVIKKTCRRLTHILLAGIPAICLCYSQISQA) form the signal peptide. One can recognise a Peptidase S6 domain in the interval 56–301 (GIVRSDIAYQ…NVIPTDYLNQ (246 aa)). Active-site charge relay system residues include histidine 127, aspartate 155, and serine 258. One can recognise an Autotransporter domain in the interval 1106 to 1372 (DTNGDAGAWA…AVNANFRYMF (267 aa)).

In terms of processing, cleaved to release the mature protein from the outer membrane.

It localises to the periplasm. The protein localises to the secreted. Its subcellular location is the cell surface. It is found in the cell outer membrane. Functionally, involved in intestinal colonization, displays in vitro mucinolytic activity, serum resistance, and hemagglutination. Important to penetrate the intestinal mucus layer. This chain is Serine protease pic autotransporter (pic), found in Escherichia coli O44:H18 (strain 042 / EAEC).